The primary structure comprises 339 residues: Acyl-CoA dehydrogenase FadE28 (339 aa).

FAD-binding residues include R227, Q238, H295, and G299.

The protein belongs to the acyl-CoA dehydrogenase family. As to quaternary structure, heterotetramer composed of FadE28 and FadE29. The cofactor is FAD.

It carries out the reaction 3-oxochol-4-en-22-oyl-CoA + A = 3-oxochola-4,17-dien-22-oyl-CoA + AH2. The protein operates within steroid metabolism; cholesterol degradation. In terms of biological role, involved in the third cycle of side chain dehydrogenation in the beta-oxidation of cholesterol catabolism. May play an important role for the initial macrophage invasion, possibly in response to the acidification of phagosome. It contributes partly to the virulence by increasing the efficiency of beta-oxidation. Catalyzes the dehydrogenation of 2'-propanoyl-CoA ester side chains of 3-oxo-4-pregnene-20-carboxyl-CoA (3-OPC-CoA) to yield 3-oxo-4,17-pregnadiene-20-carboxyl-CoA (3-OPDC-CoA). Also able to dehydrogenate steroyl-CoA such as 3-oxo-chol-4-en-24-oyl-CoA (3-OCO-CoA), 1beta-(2'-propanoyl-CoA)-3a-alpha-H-7a-beta-methylhexahydro-4-indanone (indanone-CoA ester), hexahydroindanone and pregenenone. This Mycobacterium tuberculosis (strain ATCC 25618 / H37Rv) protein is Acyl-CoA dehydrogenase FadE28 (fadE28).